Here is a 454-residue protein sequence, read N- to C-terminus: Bifunctional protein GlmU (454 aa).

Positions methionine 1 to arginine 232 are pyrophosphorylase. Residues leucine 11 to glycine 14, lysine 25, glutamine 78, and glycine 83 to threonine 84 contribute to the UDP-N-acetyl-alpha-D-glucosamine site. Residue aspartate 108 participates in Mg(2+) binding. Positions 144, 158, 173, and 230 each coordinate UDP-N-acetyl-alpha-D-glucosamine. Residue asparagine 230 coordinates Mg(2+). The tract at residues alanine 233 to serine 253 is linker. The segment at glycine 254–lysine 454 is N-acetyltransferase. UDP-N-acetyl-alpha-D-glucosamine-binding residues include arginine 319 and lysine 337. Histidine 349 functions as the Proton acceptor in the catalytic mechanism. Tyrosine 352 and asparagine 363 together coordinate UDP-N-acetyl-alpha-D-glucosamine. Acetyl-CoA is bound by residues alanine 366, asparagine 372–tyrosine 373, serine 391, serine 409, and arginine 426.

It in the N-terminal section; belongs to the N-acetylglucosamine-1-phosphate uridyltransferase family. This sequence in the C-terminal section; belongs to the transferase hexapeptide repeat family. In terms of assembly, homotrimer. Mg(2+) serves as cofactor.

Its subcellular location is the cytoplasm. The enzyme catalyses alpha-D-glucosamine 1-phosphate + acetyl-CoA = N-acetyl-alpha-D-glucosamine 1-phosphate + CoA + H(+). It carries out the reaction N-acetyl-alpha-D-glucosamine 1-phosphate + UTP + H(+) = UDP-N-acetyl-alpha-D-glucosamine + diphosphate. It participates in nucleotide-sugar biosynthesis; UDP-N-acetyl-alpha-D-glucosamine biosynthesis; N-acetyl-alpha-D-glucosamine 1-phosphate from alpha-D-glucosamine 6-phosphate (route II): step 2/2. Its pathway is nucleotide-sugar biosynthesis; UDP-N-acetyl-alpha-D-glucosamine biosynthesis; UDP-N-acetyl-alpha-D-glucosamine from N-acetyl-alpha-D-glucosamine 1-phosphate: step 1/1. The protein operates within bacterial outer membrane biogenesis; LPS lipid A biosynthesis. In terms of biological role, catalyzes the last two sequential reactions in the de novo biosynthetic pathway for UDP-N-acetylglucosamine (UDP-GlcNAc). The C-terminal domain catalyzes the transfer of acetyl group from acetyl coenzyme A to glucosamine-1-phosphate (GlcN-1-P) to produce N-acetylglucosamine-1-phosphate (GlcNAc-1-P), which is converted into UDP-GlcNAc by the transfer of uridine 5-monophosphate (from uridine 5-triphosphate), a reaction catalyzed by the N-terminal domain. This chain is Bifunctional protein GlmU, found in Brucella melitensis biotype 1 (strain ATCC 23456 / CCUG 17765 / NCTC 10094 / 16M).